Reading from the N-terminus, the 200-residue chain is Pyridoxal 5'-phosphate synthase subunit PdxT (200 aa).

50–52 provides a ligand contact to L-glutamine; sequence GES. Residue cysteine 82 is the Nucleophile of the active site. L-glutamine-binding positions include arginine 110 and 138–139; that span reads IR. Residues histidine 174 and glutamate 176 each act as charge relay system in the active site.

The protein belongs to the glutaminase PdxT/SNO family. In terms of assembly, in the presence of PdxS, forms a dodecamer of heterodimers. Only shows activity in the heterodimer.

It catalyses the reaction aldehydo-D-ribose 5-phosphate + D-glyceraldehyde 3-phosphate + L-glutamine = pyridoxal 5'-phosphate + L-glutamate + phosphate + 3 H2O + H(+). It carries out the reaction L-glutamine + H2O = L-glutamate + NH4(+). The protein operates within cofactor biosynthesis; pyridoxal 5'-phosphate biosynthesis. In terms of biological role, catalyzes the hydrolysis of glutamine to glutamate and ammonia as part of the biosynthesis of pyridoxal 5'-phosphate. The resulting ammonia molecule is channeled to the active site of PdxS. This Oceanobacillus iheyensis (strain DSM 14371 / CIP 107618 / JCM 11309 / KCTC 3954 / HTE831) protein is Pyridoxal 5'-phosphate synthase subunit PdxT.